The primary structure comprises 226 residues: Xanthocillin biosynthesis cluster protein F (226 aa).

Its pathway is secondary metabolite biosynthesis. Its function is as follows. Part of the gene cluster that mediates the biosynthesis of the isocyanide xanthocillin and its derivatives. The first step of the pathway consists in the conversion of tyrosine into a vinyl-isonitrile intermediate by the isocyanide synthase xanB. Subsequent oxidative dimerization of this intermediate to form xanthocillin may involve the cytochrome P450 monooxygenase xanG, whose expression is coregulated with that of XanB. Xanthocillin can be further modified by the isonitrile hydratase-like protein xanA which introduces N-formyl groups and the methyltransferase xanE which introduces methyl groups, leading to the production of several derivatives including fumiformamide. Finally, fumiformamide can be subject to both oxidative and reductive cyclization to yield melanocins E and F, respectively. The protein is Xanthocillin biosynthesis cluster protein F of Aspergillus fumigatus (strain ATCC MYA-4609 / CBS 101355 / FGSC A1100 / Af293) (Neosartorya fumigata).